Consider the following 534-residue polypeptide: CTP synthase (534 aa).

Residues Met1–Ile267 are amidoligase domain. Ser13 provides a ligand contact to CTP. Ser13 lines the UTP pocket. Ser14–Ile19 provides a ligand contact to ATP. L-glutamine is bound at residue Tyr54. Asp71 contacts ATP. Positions 71 and 141 each coordinate Mg(2+). CTP is bound by residues Asp148–Glu150, Lys188–Gln193, and Lys224. UTP contacts are provided by residues Lys188–Gln193 and Lys224. One can recognise a Glutamine amidotransferase type-1 domain in the interval Lys294–Asn532. Gly353 provides a ligand contact to L-glutamine. Catalysis depends on Cys380, which acts as the Nucleophile; for glutamine hydrolysis. L-glutamine is bound by residues Leu381–His384, Glu403, and Arg460. Catalysis depends on residues His505 and Glu507.

Belongs to the CTP synthase family. As to quaternary structure, homotetramer.

The enzyme catalyses UTP + L-glutamine + ATP + H2O = CTP + L-glutamate + ADP + phosphate + 2 H(+). It carries out the reaction L-glutamine + H2O = L-glutamate + NH4(+). The catalysed reaction is UTP + NH4(+) + ATP = CTP + ADP + phosphate + 2 H(+). It functions in the pathway pyrimidine metabolism; CTP biosynthesis via de novo pathway; CTP from UDP: step 2/2. Allosterically activated by GTP, when glutamine is the substrate; GTP has no effect on the reaction when ammonia is the substrate. The allosteric effector GTP functions by stabilizing the protein conformation that binds the tetrahedral intermediate(s) formed during glutamine hydrolysis. Inhibited by the product CTP, via allosteric rather than competitive inhibition. Its function is as follows. Catalyzes the ATP-dependent amination of UTP to CTP with either L-glutamine or ammonia as the source of nitrogen. Regulates intracellular CTP levels through interactions with the four ribonucleotide triphosphates. The sequence is that of CTP synthase from Methanosphaera stadtmanae (strain ATCC 43021 / DSM 3091 / JCM 11832 / MCB-3).